We begin with the raw amino-acid sequence, 231 residues long: Superoxide dismutase [Mn] 1, mitochondrial (231 aa).

The N-terminal 29 residues, 1–29 (MAIRCVASRKTLAGLKETSSRLLRIRGIQ), are a transit peptide targeting the mitochondrion. Histidine 55 and histidine 103 together coordinate Mn(2+). Serine 124 bears the Phosphoserine mark. The Mn(2+) site is built by aspartate 192 and histidine 196.

Belongs to the iron/manganese superoxide dismutase family. As to quaternary structure, homotetramer. The cofactor is Mn(2+).

It is found in the mitochondrion matrix. It carries out the reaction 2 superoxide + 2 H(+) = H2O2 + O2. Activated by MTM1. Its function is as follows. Destroys superoxide anion radicals which are normally produced within the cells and which are toxic to biological systems. This is Superoxide dismutase [Mn] 1, mitochondrial (MSD1) from Arabidopsis thaliana (Mouse-ear cress).